The sequence spans 474 residues: 3-isopropylmalate dehydratase large subunit (474 aa).

[4Fe-4S] cluster contacts are provided by C353, C414, and C417.

This sequence belongs to the aconitase/IPM isomerase family. LeuC type 1 subfamily. In terms of assembly, heterodimer of LeuC and LeuD. The cofactor is [4Fe-4S] cluster.

The enzyme catalyses (2R,3S)-3-isopropylmalate = (2S)-2-isopropylmalate. It functions in the pathway amino-acid biosynthesis; L-leucine biosynthesis; L-leucine from 3-methyl-2-oxobutanoate: step 2/4. Its function is as follows. Catalyzes the isomerization between 2-isopropylmalate and 3-isopropylmalate, via the formation of 2-isopropylmaleate. The protein is 3-isopropylmalate dehydratase large subunit of Pseudomonas paraeruginosa (strain DSM 24068 / PA7) (Pseudomonas aeruginosa (strain PA7)).